A 58-amino-acid polypeptide reads, in one-letter code: Small ribosomal subunit protein bS21 (58 aa).

The tract at residues 25 to 58 (KAGTLQEARKREHYEKPSVKRKRKSEAARKRKKI) is disordered. Basic and acidic residues predominate over residues 31–42 (EARKREHYEKPS). The segment covering 43 to 58 (VKRKRKSEAARKRKKI) has biased composition (basic residues).

The protein belongs to the bacterial ribosomal protein bS21 family.

This is Small ribosomal subunit protein bS21 from Streptococcus thermophilus (strain ATCC BAA-491 / LMD-9).